Here is a 1067-residue protein sequence, read N- to C-terminus: Eukaryotic translation initiation factor 3 subunit A (1067 aa).

The stretch at 92 to 121 (LKKFIELAEKKVTEAQAKADEIQSSLESAA) forms a coiled coil. Positions 339–523 (MTKAASFVLL…GVLTFDTDIF (185 aa)) constitute a PCI domain. Residues 608–899 (RVLIEKKKEA…QKQREEEAEA (292 aa)) adopt a coiled-coil conformation. Basic and acidic residues-rich tracts occupy residues 617-632 (AATD…EETR), 642-665 (EAEK…DEQD), 795-901 (EVSE…EARR), and 916-926 (AEPERPAERTA). 2 disordered regions span residues 617 to 665 (AATD…DEQD) and 795 to 1067 (EVSE…QQQQ). Composition is skewed to low complexity over residues 965–976 (AAPAAAPAPAAE) and 1025–1046 (SSSS…AASS).

This sequence belongs to the eIF-3 subunit A family. Component of the eukaryotic translation initiation factor 3 (eIF-3) complex.

It is found in the cytoplasm. In terms of biological role, RNA-binding component of the eukaryotic translation initiation factor 3 (eIF-3) complex, which is involved in protein synthesis of a specialized repertoire of mRNAs and, together with other initiation factors, stimulates binding of mRNA and methionyl-tRNAi to the 40S ribosome. The eIF-3 complex specifically targets and initiates translation of a subset of mRNAs involved in cell proliferation. This Neosartorya fischeri (strain ATCC 1020 / DSM 3700 / CBS 544.65 / FGSC A1164 / JCM 1740 / NRRL 181 / WB 181) (Aspergillus fischerianus) protein is Eukaryotic translation initiation factor 3 subunit A (tif32).